Reading from the N-terminus, the 78-residue chain is Large ribosomal subunit protein bL28 (78 aa).

Belongs to the bacterial ribosomal protein bL28 family.

This is Large ribosomal subunit protein bL28 from Tropheryma whipplei (strain TW08/27) (Whipple's bacillus).